The following is a 208-amino-acid chain: Ras-related protein Rab-6A (208 aa).

Ser2 carries the N-acetylserine modification. Ser23, Val24, Gly25, Lys26, Thr27, Ser28, Asp39, Asn40, Tyr42, and Thr45 together coordinate GTP. Thr27 lines the Mg(2+) pocket. Residues 32–50 carry the Switch 1 motif; that stretch reads RFMYDSFDNTYQATIGIDF. 2 residues coordinate Mg(2+): Thr45 and Asp68. The short motif at 69-88 is the Switch 2 element; it reads TAGQERFRSLIPSYIRDSTV. GTP-binding residues include Gly71, Asn126, Lys127, Asp129, Ser156, Ala157, and Lys158. Ser184 carries the post-translational modification Phosphoserine. 2 S-geranylgeranyl cysteine lipidation sites follow: Cys206 and Cys208. Cys208 carries the cysteine methyl ester modification.

It belongs to the small GTPase superfamily. Rab family. As to quaternary structure, interacts with BICDL1; leads to its accumulation in the pericentrosomal region. Interacts with SCYL1BP1. Interacts with VSP52. Interacts with RABGAP1. Interacts with GCC2 (via its GRIP domain). Interacts with RAB6IP1 (via its RUN 1 domain). Interacts with TMF1. Interacts with CIMAP3. Interacts (GTP-bound) with APBA1/MINT1 isoform 3, also called Mint1_826, but not with isoform 1. Interacts with RIC1; the interaction is direct with a preference for RAB6A-GDP. Interacts with RGP1; the interaction is direct with a preference for RAB6A-GDP. In terms of assembly, interacts (GTP-bound) with DYNLRB1; the interaction is direct. Interacts with BICD1. Interacts with BICD2; the interaction is direct. Interacts (GTP-bound) with VPS13B. Interacts with BICD1. Interacts (GDP-bound) with DYNLRB1; the interaction is direct. Interacts (GTP-bound) with VPS13B. Mg(2+) serves as cofactor. Prenylated.

It localises to the golgi apparatus membrane. It is found in the cytoplasmic vesicle. The protein resides in the secretory vesicle. The protein localises to the acrosome membrane. It catalyses the reaction GTP + H2O = GDP + phosphate + H(+). Its activity is regulated as follows. Regulated by guanine nucleotide exchange factors (GEFs) which promote the exchange of bound GDP for free GTP. Regulated by GTPase activating proteins (GAPs) which increase the GTP hydrolysis activity. Inhibited by GDP dissociation inhibitors (GDIs). The small GTPases Rab are key regulators of intracellular membrane trafficking, from the formation of transport vesicles to their fusion with membranes. Rabs cycle between an inactive GDP-bound form and an active GTP-bound form that is able to recruit to membranes different sets of downstream effectors directly responsible for vesicle formation, movement, tethering and fusion. RAB6A acts as a regulator of COPI-independent retrograde transport from the Golgi apparatus towards the endoplasmic reticulum (ER). Has a low GTPase activity. Recruits VPS13B to the Golgi membrane. Plays a role in neuron projection development. The chain is Ras-related protein Rab-6A from Mus musculus (Mouse).